Consider the following 178-residue polypeptide: Peptide deformylase (178 aa).

Residues cysteine 92 and histidine 134 each contribute to the Fe cation site. The active site involves glutamate 135. Residue histidine 138 participates in Fe cation binding.

This sequence belongs to the polypeptide deformylase family. It depends on Fe(2+) as a cofactor.

The enzyme catalyses N-terminal N-formyl-L-methionyl-[peptide] + H2O = N-terminal L-methionyl-[peptide] + formate. In terms of biological role, removes the formyl group from the N-terminal Met of newly synthesized proteins. Requires at least a dipeptide for an efficient rate of reaction. N-terminal L-methionine is a prerequisite for activity but the enzyme has broad specificity at other positions. The polypeptide is Peptide deformylase (Alkalilimnicola ehrlichii (strain ATCC BAA-1101 / DSM 17681 / MLHE-1)).